Reading from the N-terminus, the 105-residue chain is L-rhamnose mutarotase (105 aa).

Substrate is bound at residue Tyr19. The active-site Proton donor is the His23. Substrate contacts are provided by residues Tyr42 and 77–78 (WW).

It belongs to the rhamnose mutarotase family. As to quaternary structure, homodimer.

It localises to the cytoplasm. The enzyme catalyses alpha-L-rhamnose = beta-L-rhamnose. It functions in the pathway carbohydrate metabolism; L-rhamnose metabolism. Involved in the anomeric conversion of L-rhamnose. This is L-rhamnose mutarotase from Mesorhizobium japonicum (strain LMG 29417 / CECT 9101 / MAFF 303099) (Mesorhizobium loti (strain MAFF 303099)).